A 290-amino-acid chain; its full sequence is uncharacterized protein (290 aa).

Positions 153 to 178 (EMVPITTSSTTPRSKGDEATSTGAFP) are disordered. Residues 157–178 (ITTSSTTPRSKGDEATSTGAFP) are compositionally biased toward polar residues. Residues 202–222 (LIAVTLLLGGAAIIVFVIFEV) traverse the membrane as a helical segment. The disordered stretch occupies residues 246-276 (KEEDQKPGTTESQLDSQPEKVKHNVPNSSDS). Polar residues predominate over residues 252–261 (PGTTESQLDS).

It is found in the membrane. This is an uncharacterized protein from Mus musculus (Mouse).